The sequence spans 435 residues: MAFIDKCKIVLIAGNGGDGIVSWRRETHVPEGGPAGGNGGNGGSIWFVGNHNETSLEFLKYKKIIRAKHGEKGDIKNQHGANAEDVFINVPLGTVVYDAITNEILADINIDQQKYLVAQGGLGGHGNTHFKSAFNKAPNLYELGELGENIEVVLELKTIADIGIIGLPNAGKSTLISSFTNAKPKTANYMFTTLNPVLGTIYRDQNRIIFADIPGLIEGAHTGVGLGHDFLKHIERCFLLIHLISLDPNDNSDIISAYETIVNELKQYKQSLVNKPIVLVANKIDQIGALENLQILKEHLKDNQYIKVISALTNLHVDAMLDDVIKIYFDQKKIYEQRLKEHLPVDQILKWASDTPKNKELDKTIKIVKVDDHFFEVFGEYLKYWVHRIPLKTQDNLIRFNQKLQSINFNQQLLQAGAIAGDSIKIYDITLEFEE.

One can recognise an Obg domain in the interval 1–159 (MAFIDKCKIV…IEVVLELKTI (159 aa)). Positions 160-329 (ADIGIIGLPN…MLDDVIKIYF (170 aa)) constitute an OBG-type G domain. GTP-binding positions include 166–173 (GLPNAGKS), 191–195 (FTTLN), 212–215 (DIPG), 282–285 (NKID), and 310–312 (SAL). Residues S173 and T193 each coordinate Mg(2+). The 81-residue stretch at 355–435 (TPKNKELDKT…IYDITLEFEE (81 aa)) folds into the OCT domain.

The protein belongs to the TRAFAC class OBG-HflX-like GTPase superfamily. OBG GTPase family. Monomer. Mg(2+) serves as cofactor.

Its subcellular location is the cytoplasm. Functionally, an essential GTPase which binds GTP, GDP and possibly (p)ppGpp with moderate affinity, with high nucleotide exchange rates and a fairly low GTP hydrolysis rate. Plays a role in control of the cell cycle, stress response, ribosome biogenesis and in those bacteria that undergo differentiation, in morphogenesis control. In Ureaplasma urealyticum serovar 10 (strain ATCC 33699 / Western), this protein is GTPase Obg.